Here is a 361-residue protein sequence, read N- to C-terminus: UDP-D-xylose:L-fucose alpha-1,3-D-xylosyltransferase 1 (361 aa).

Residues 1 to 21 are disordered; it reads MEQKQHILKQSTFSSSPSSYS. At 1 to 34 the chain is on the cytoplasmic side; that stretch reads MEQKQHILKQSTFSSSPSSYSSISDRPISLLSRN. Positions 11 to 21 are enriched in low complexity; it reads STFSSSPSSYS. A helical; Signal-anchor for type II membrane protein transmembrane segment spans residues 35 to 55; it reads GLLLLLLALVLLLGVLLPWPG. Over 56–361 the chain is Lumenal; sequence SPLFLFPNRL…ALESPLGKLE (306 aa). Residues Asn-92 and Asn-167 are each glycosylated (N-linked (GlcNAc...) asparagine). The DXD motif signature appears at 190–192; that stretch reads DVD. N-linked (GlcNAc...) asparagine glycans are attached at residues Asn-222 and Asn-286.

Belongs to the glycosyltransferase 77 family. It depends on Mn(2+) as a cofactor. Mg(2+) serves as cofactor. In terms of processing, glycosylated. Expressed in roots, rosette leaves, cauline leaves and stems.

The protein resides in the golgi apparatus membrane. Catalyzes the transfer of D-xylose from UDP-alpha-D-xylose onto L-fucose. Probably involved in the biosynthesis of rhamnogalacturonan II (RG-II) through xylosylation of the internal fucose moiety of the A-chain of RG-II, a structurally complex pectic polysaccharide of the primary cell wall. RG-II is essential for the cell wall integrity of rapidly growing tissues such as roots and pollen tube growth and elongation. The sequence is that of UDP-D-xylose:L-fucose alpha-1,3-D-xylosyltransferase 1 from Arabidopsis thaliana (Mouse-ear cress).